Reading from the N-terminus, the 75-residue chain is ATP synthase subunit c (75 aa).

A run of 2 helical transmembrane segments spans residues 4–24 (GLIAIGIGISMISGLGVGLGQ) and 54–74 (AVAESAAIYALVISILLMFAF).

Belongs to the ATPase C chain family. As to quaternary structure, F-type ATPases have 2 components, F(1) - the catalytic core - and F(0) - the membrane proton channel. F(1) has five subunits: alpha(3), beta(3), gamma(1), delta(1), epsilon(1). F(0) has three main subunits: a(1), b(2) and c(10-14). The alpha and beta chains form an alternating ring which encloses part of the gamma chain. F(1) is attached to F(0) by a central stalk formed by the gamma and epsilon chains, while a peripheral stalk is formed by the delta and b chains.

It is found in the cell membrane. Its function is as follows. F(1)F(0) ATP synthase produces ATP from ADP in the presence of a proton or sodium gradient. F-type ATPases consist of two structural domains, F(1) containing the extramembraneous catalytic core and F(0) containing the membrane proton channel, linked together by a central stalk and a peripheral stalk. During catalysis, ATP synthesis in the catalytic domain of F(1) is coupled via a rotary mechanism of the central stalk subunits to proton translocation. Key component of the F(0) channel; it plays a direct role in translocation across the membrane. A homomeric c-ring of between 10-14 subunits forms the central stalk rotor element with the F(1) delta and epsilon subunits. In Mycoplasmopsis agalactiae (strain NCTC 10123 / CIP 59.7 / PG2) (Mycoplasma agalactiae), this protein is ATP synthase subunit c.